The sequence spans 446 residues: NADH oxidase (446 aa).

Residues 7–11 (GCTHA), Glu32, Cys42, Val79, 110–113 (TTGS), Lys132, and Tyr157 contribute to the FAD site. His10 functions as the Proton acceptor in the catalytic mechanism. The active-site Redox-active is Cys42. Cysteine sulfinic acid (-SO2H) is present on Cys42. NAD(+)-binding positions include 150 to 165 (VVVVGGGYIGIELVEA), Asp177, Tyr186, and Gly243. Residues 271-281 (TSNPDIFAAGD), Leu298, Ala299, and Thr300 each bind FAD. Gly328 contributes to the NAD(+) binding site. Phe424 is a binding site for FAD.

This sequence belongs to the class-III pyridine nucleotide-disulfide oxidoreductase family. Homodimer. FAD is required as a cofactor. Post-translationally, the N-terminus is blocked.

The enzyme catalyses 2 NADH + O2 + 2 H(+) = 2 NAD(+) + 2 H2O. Its function is as follows. Catalyzes the four-electron reduction of molecular oxygen to water. The polypeptide is NADH oxidase (nox) (Enterococcus faecalis (strain ATCC 700802 / V583)).